The chain runs to 465 residues: Alpha-2A adrenergic receptor (465 aa).

The Extracellular segment spans residues 1–48; it reads MFRQEQPLAEGSFAPMGSLQPDAGNSSWNGTEAPGGGTRATPYSLQVT. 2 N-linked (GlcNAc...) asparagine glycosylation sites follow: asparagine 25 and asparagine 29. The helical transmembrane segment at 49–74 threads the bilayer; that stretch reads LTLVCLAGLLMLFTVFGNVLVIIAVF. The Cytoplasmic portion of the chain corresponds to 75 to 85; it reads TSRALKAPQNL. Residues 86-111 traverse the membrane as a helical segment; the sequence is FLVSLASADILVATLVIPFSLANEVM. Over 112–121 the chain is Extracellular; it reads GYWYFGKVWC. A disulfide bond links cysteine 121 and cysteine 203. Residues 122 to 144 traverse the membrane as a helical segment; sequence EIYLALDVLFCTSSIVHLCAISL. The Cytoplasmic portion of the chain corresponds to 145 to 164; sequence DRYWSITQAIEYNLKRTPRR. Residues 165 to 188 form a helical membrane-spanning segment; the sequence is IKAIIVTVWVISAVISFPPLISIE. The Extracellular segment spans residues 189–207; that stretch reads KKGAGGGQQPAEPSCKIND. The chain crosses the membrane as a helical span at residues 208 to 232; sequence QKWYVISSSIGSFFAPCLIMILVYV. The Cytoplasmic segment spans residues 233–389; sequence RIYQIAKRRT…RQNREKRFTF (157 aa). The tract at residues 242-377 is disordered; that stretch reads TRVPPSRRGP…RAGGAKASRW (136 aa). Basic and acidic residues predominate over residues 313–330; that stretch reads SSEHAERPQGPGKPERGP. Serine 346 carries the post-translational modification Phosphoserine. Gly residues predominate over residues 353–364; the sequence is GAAGPGASGSGQ. Arginine 368 carries the post-translational modification Omega-N-methylarginine. The chain crosses the membrane as a helical span at residues 390 to 414; the sequence is VLAVVIGVFVVCWFPFFFTYTLIAV. Residues 415–424 are Extracellular-facing; that stretch reads GCPVPYQLFN. The chain crosses the membrane as a helical span at residues 425-445; that stretch reads FFFWFGYCNSSLNPVIYTIFN. Residues 446–465 are Cytoplasmic-facing; sequence HDFRRAFKKILCRGDRKRIV. The S-palmitoyl cysteine moiety is linked to residue cysteine 457.

It belongs to the G-protein coupled receptor 1 family. Adrenergic receptor subfamily. ADRA2A sub-subfamily. In terms of tissue distribution, expressed in brain.

It localises to the cell membrane. Its function is as follows. Alpha-2 adrenergic receptors mediate the catecholamine-induced inhibition of adenylate cyclase through the action of G proteins. In Rattus norvegicus (Rat), this protein is Alpha-2A adrenergic receptor.